The sequence spans 713 residues: Nucleoporin NUP82 (713 aa).

The tract at residues 1–409 (MSQSSRLSAL…SDLNPLAGLK (409 aa)) is interaction with NUP116. Positions 463–713 (TSISTEKSDT…VSQEFTTKTQ (251 aa)) are interaction with NSP1 and NUP159. The stretch at 582–713 (EAQNKKWDAQ…VSQEFTTKTQ (132 aa)) forms a coiled coil. A Bipartite nuclear localization signal motif is present at residues 607–623 (KKLSQIAESNKFKEKKI).

As to quaternary structure, component of the nuclear pore complex (NPC). NPC constitutes the exclusive means of nucleocytoplasmic transport. NPCs allow the passive diffusion of ions and small molecules and the active, nuclear transport receptor-mediated bidirectional transport of macromolecules such as proteins, RNAs, ribonucleoparticles (RNPs), and ribosomal subunits across the nuclear envelope. Due to its 8-fold rotational symmetry, all subunits are present with 8 copies or multiples thereof. NUP82 is part of the NUP82 subcomplex. This subcomplex is the base for interactions with NUP116 and GLE2, with NUP42 and GLE1 and with DYN2.

The protein localises to the nucleus. It localises to the nuclear pore complex. The protein resides in the nucleus membrane. Functions as a component of the nuclear pore complex (NPC). NPC components, collectively referred to as nucleoporins (NUPs), can play the role of both NPC structural components and of docking or interaction partners for transiently associated nuclear transport factors. It is specifically involved as part of the NUP82-NUP159-NSP1 subcomplex in nuclear mRNA and pre-ribosome export by acting as a linker tethering nucleoporins that are directly involved in nuclear transport to the NPC via its coiled-coil domain. This is Nucleoporin NUP82 (NUP82) from Saccharomyces cerevisiae (strain ATCC 204508 / S288c) (Baker's yeast).